The following is a 607-amino-acid chain: WD repeat-containing protein 1-B (607 aa).

WD repeat units follow at residues glutamate 4–isoleucine 45, proline 48–threonine 87, leucine 93–threonine 135, serine 138–glycine 176, lysine 180–glycine 218, valine 224–valine 263, threonine 270–lysine 306, lysine 311–alanine 351, threonine 358–valine 408, leucine 432–isoleucine 474, lysine 480–valine 518, serine 523–leucine 561, and threonine 566–valine 604.

Belongs to the WD repeat AIP1 family.

It is found in the cell membrane. Its subcellular location is the cytoplasm. The protein resides in the cytoskeleton. The protein localises to the nucleus. Functionally, induces disassembly of actin filaments in conjunction with ADF/cofilin family proteins. Doesn't sever actin filaments alone, but caps the barbed ends of filaments severed by cofilin, which blocks annealing and depolymerization and allows more extensive severing by cofilin. In Xenopus laevis (African clawed frog), this protein is WD repeat-containing protein 1-B (wdr1-b).